Here is a 309-residue protein sequence, read N- to C-terminus: Coproporphyrin III ferrochelatase (309 aa).

Fe-coproporphyrin III-binding positions include tyrosine 12, threonine 14, arginine 29, 45–46 (RY), serine 53, and tyrosine 124. Residues histidine 182 and glutamate 263 each coordinate Fe(2+).

Belongs to the ferrochelatase family. Monomer.

Its subcellular location is the cytoplasm. It catalyses the reaction Fe-coproporphyrin III + 2 H(+) = coproporphyrin III + Fe(2+). It functions in the pathway porphyrin-containing compound metabolism; protoheme biosynthesis. Functionally, involved in coproporphyrin-dependent heme b biosynthesis. Catalyzes the insertion of ferrous iron into coproporphyrin III to form Fe-coproporphyrin III. The polypeptide is Coproporphyrin III ferrochelatase (Listeria monocytogenes serovar 1/2a (strain ATCC BAA-679 / EGD-e)).